A 466-amino-acid chain; its full sequence is MPHSYDYDAIVIGSGPGGEGAAMGLVKQGARVAVIERYQNVGGGCTHWGTIPSKALRHAVSRIIEFNQNPLYSDHSRLLRSSFADILNHADNVINQQTRMRQGFYERNHCEILQGNARFVDEHTLALDCPDGSVETLTAEKFVIACGSRPYHPTDVDFTHPRIYDSDSILSMHHEPRHVLIYGAGVIGCEYASIFRGMDVKVDLINTRDRLLAFLDQEMSDSLSYHFWNSGVVIRHNEEYEKIESCDDGVIMHLKSGKKLKADCLLYANGRTGNTDSLALQNIGLETDSRGQLKVNSMYQTAQPHVYAVGDVIGYPSLASAAYDQGRIAAQALVKGEATAHLIEDIPTGIYTIPEISSVGKTEQQLTAMKVPYEVGRAQFKHLARAQIVGMNVGTLKILFHRETKEILGIHCFGERAAEIIHIGQAIMEQKGGGNTIEYFVNTTFNYPTMAEAYRVAALNGLNRLF.

36–45 is a binding site for FAD; that stretch reads ERYQNVGGGC.

Belongs to the class-I pyridine nucleotide-disulfide oxidoreductase family. Homooligomer; probable homooctamer. Requires FAD as cofactor.

It is found in the cytoplasm. The enzyme catalyses NAD(+) + NADPH = NADH + NADP(+). In terms of biological role, conversion of NADPH, generated by peripheral catabolic pathways, to NADH, which can enter the respiratory chain for energy generation. This chain is Soluble pyridine nucleotide transhydrogenase, found in Shigella flexneri.